A 102-amino-acid chain; its full sequence is Small ribosomal subunit protein uS10 (102 aa).

The protein belongs to the universal ribosomal protein uS10 family. In terms of assembly, part of the 30S ribosomal subunit.

In terms of biological role, involved in the binding of tRNA to the ribosomes. The protein is Small ribosomal subunit protein uS10 of Leifsonia xyli subsp. xyli (strain CTCB07).